The following is a 73-amino-acid chain: Translation initiation factor IF-1 (73 aa).

One can recognise an S1-like domain in the interval 1 to 73 (MAKKDGAIEI…TRGRIVYRYK (73 aa)).

The protein belongs to the IF-1 family. In terms of assembly, component of the 30S ribosomal translation pre-initiation complex which assembles on the 30S ribosome in the order IF-2 and IF-3, IF-1 and N-formylmethionyl-tRNA(fMet); mRNA recruitment can occur at any time during PIC assembly.

It localises to the cytoplasm. In terms of biological role, one of the essential components for the initiation of protein synthesis. Stabilizes the binding of IF-2 and IF-3 on the 30S subunit to which N-formylmethionyl-tRNA(fMet) subsequently binds. Helps modulate mRNA selection, yielding the 30S pre-initiation complex (PIC). Upon addition of the 50S ribosomal subunit IF-1, IF-2 and IF-3 are released leaving the mature 70S translation initiation complex. This Thermobifida fusca (strain YX) protein is Translation initiation factor IF-1.